We begin with the raw amino-acid sequence, 141 residues long: Mite group 2 allergen Lep d 2 (141 aa).

The first 16 residues, 1–16 (MMKFIALFALVAVASA), serve as a signal peptide directing secretion. 3 cysteine pairs are disulfide-bonded: Cys-24–Cys-133, Cys-37–Cys-42, and Cys-88–Cys-93. 3 repeat units span residues 64–65 (KV), 68–69 (KV), and 72–73 (KV). A 3 X 2 AA repeats of K-V region spans residues 64–73 (KVTIKVLAKV).

Belongs to the NPC2 family. As to quaternary structure, monomer.

The protein resides in the secreted. The sequence is that of Mite group 2 allergen Lep d 2 from Lepidoglyphus destructor (Storage mite).